Reading from the N-terminus, the 470-residue chain is Nuclear segregation protein BFR1 (470 aa).

Coiled coils occupy residues 17–178 and 237–281; these read DKKL…NGLN and NEFK…THAK. Ser-260 bears the Phosphoserine mark. Thr-336 carries the post-translational modification Phosphothreonine. The segment at 346-368 is disordered; it reads APSKSKKYKKKNQQKNTENEQPA. The segment covering 349–358 has biased composition (basic residues); sequence KSKKYKKKNQ. Ser-369 is modified (phosphoserine). The stretch at 398-469 forms a coiled coil; sequence NSDDVKITVE…EQEESEKDKE (72 aa). The interval 447 to 470 is disordered; sequence QQVKKELEEKRLKEQEESEKDKEN.

Its function is as follows. Implicated in secretion, nuclear segregation and in maintenance of cell size. The chain is Nuclear segregation protein BFR1 (BFR1) from Saccharomyces cerevisiae (strain ATCC 204508 / S288c) (Baker's yeast).